Reading from the N-terminus, the 378-residue chain is Probable dihydroorotase-like protein (378 aa).

This sequence belongs to the metallo-dependent hydrolases superfamily. DHOase family. PyrC' subfamily.

Its function is as follows. Non-functional DHOase. This chain is Probable dihydroorotase-like protein (pyrC'), found in Helicobacter pylori (strain J99 / ATCC 700824) (Campylobacter pylori J99).